Reading from the N-terminus, the 396-residue chain is Acetate kinase (396 aa).

N7 provides a ligand contact to Mg(2+). K14 provides a ligand contact to ATP. R88 contributes to the substrate binding site. The Proton donor/acceptor role is filled by D145. Residues 205–209, 279–281, and 327–331 each bind ATP; these read HLGNG, DFR, and GIGEN. E381 contributes to the Mg(2+) binding site.

The protein belongs to the acetokinase family. Homodimer. Mg(2+) serves as cofactor. It depends on Mn(2+) as a cofactor.

The protein localises to the cytoplasm. The catalysed reaction is acetate + ATP = acetyl phosphate + ADP. It participates in metabolic intermediate biosynthesis; acetyl-CoA biosynthesis; acetyl-CoA from acetate: step 1/2. Its function is as follows. Catalyzes the formation of acetyl phosphate from acetate and ATP. Can also catalyze the reverse reaction. This Campylobacter jejuni subsp. jejuni serotype O:23/36 (strain 81-176) protein is Acetate kinase.